The following is a 240-amino-acid chain: Aspartate/glutamate leucyltransferase (240 aa).

It belongs to the R-transferase family. Bpt subfamily.

Its subcellular location is the cytoplasm. The catalysed reaction is N-terminal L-glutamyl-[protein] + L-leucyl-tRNA(Leu) = N-terminal L-leucyl-L-glutamyl-[protein] + tRNA(Leu) + H(+). It catalyses the reaction N-terminal L-aspartyl-[protein] + L-leucyl-tRNA(Leu) = N-terminal L-leucyl-L-aspartyl-[protein] + tRNA(Leu) + H(+). Its function is as follows. Functions in the N-end rule pathway of protein degradation where it conjugates Leu from its aminoacyl-tRNA to the N-termini of proteins containing an N-terminal aspartate or glutamate. The sequence is that of Aspartate/glutamate leucyltransferase from Gluconobacter oxydans (strain 621H) (Gluconobacter suboxydans).